An 849-amino-acid chain; its full sequence is DNA mismatch repair protein MutS (849 aa).

602-609 (GPNMSGKS) lines the ATP pocket.

The protein belongs to the DNA mismatch repair MutS family.

Functionally, this protein is involved in the repair of mismatches in DNA. It is possible that it carries out the mismatch recognition step. This protein has a weak ATPase activity. This Streptococcus sanguinis (strain SK36) protein is DNA mismatch repair protein MutS.